The following is a 309-amino-acid chain: Taste receptor type 2 member 8 (309 aa).

At 1–7 (MFSPADN) the chain is on the extracellular side. The chain crosses the membrane as a helical span at residues 8-28 (IFIILITGEFILGILGNGYIA). Over 29–50 (LVNWIDWIKKKKISTIDYILTN) the chain is Cytoplasmic. Residues 51–71 (LVISRICLISVMVVNGIVIAV) traverse the membrane as a helical segment. The Extracellular segment spans residues 72–82 (YPDVYTKSKLQ). A helical transmembrane segment spans residues 83 to 103 (IAICTFWTFANYLNMWITTCL). Residues 104-131 (NVFYFLKIANSSHPLFLWLKQKIDMVVR) are Cytoplasmic-facing. The helical transmembrane segment at 132–152 (WILLGCFAISLLVSLIAAIVL) threads the bilayer. Residues 153–184 (SYDYRFHAIAKHKRNITEMFHVSKRPYFEPLT) are Extracellular-facing. A glycan (N-linked (GlcNAc...) asparagine) is linked at asparagine 167. The helical transmembrane segment at 185 to 205 (LFNLFAIVPFIVSLISFFLLV) threads the bilayer. Residues 206–239 (RSLWRHTKQIKLYATGGRDPSTEVHVRAIKTMTS) lie on the Cytoplasmic side of the membrane. The helical transmembrane segment at 240-260 (FIFLFFLYYISSILVTFSYLM) threads the bilayer. Topologically, residues 261–266 (TKYKLA) are extracellular. Residues 267-287 (VEFGEIVAILYPLGHSLILIV) form a helical membrane-spanning segment. Over 288-309 (LNNKLRQTFVRMLTCRKIACVI) the chain is Cytoplasmic.

Belongs to the G-protein coupled receptor T2R family.

It is found in the membrane. In terms of biological role, receptor that may play a role in the perception of bitterness and is gustducin-linked. May play a role in sensing the chemical composition of the gastrointestinal content. The activity of this receptor may stimulate alpha gustducin, mediate PLC-beta-2 activation and lead to the gating of TRPM5. The sequence is that of Taste receptor type 2 member 8 (TAS2R8) from Gorilla gorilla gorilla (Western lowland gorilla).